Reading from the N-terminus, the 225-residue chain is UPF0173 metal-dependent hydrolase PF1764 (225 aa).

The protein belongs to the UPF0173 family.

This chain is UPF0173 metal-dependent hydrolase PF1764, found in Pyrococcus furiosus (strain ATCC 43587 / DSM 3638 / JCM 8422 / Vc1).